The chain runs to 401 residues: Argininosuccinate synthase (401 aa).

ATP contacts are provided by residues 10–18 (AYSGGVDTS) and Ala-38. Tyr-89 is a binding site for L-citrulline. An ATP-binding site is contributed by Gly-119. Residues Thr-121, Asn-125, and Asp-126 each contribute to the L-aspartate site. Position 125 (Asn-125) interacts with L-citrulline. Residues Arg-129, Ser-177, Ser-186, Glu-262, and Tyr-274 each coordinate L-citrulline.

It belongs to the argininosuccinate synthase family. Type 1 subfamily. Homotetramer.

It is found in the cytoplasm. It catalyses the reaction L-citrulline + L-aspartate + ATP = 2-(N(omega)-L-arginino)succinate + AMP + diphosphate + H(+). It participates in amino-acid biosynthesis; L-arginine biosynthesis; L-arginine from L-ornithine and carbamoyl phosphate: step 2/3. The sequence is that of Argininosuccinate synthase from Microcystis aeruginosa (strain NIES-843 / IAM M-2473).